The primary structure comprises 1851 residues: Voltage-dependent calcium channel type A subunit alpha-1 (1851 aa).

Topologically, residues 1 to 38 (MGGPKKEENPPGGGPTSLFILTEDNPIRKYTRFIIEWP) are cytoplasmic. Residues 25–316 (NPIRKYTRFI…LVLGVLSGEF (292 aa)) form an I repeat. A helical transmembrane segment spans residues 39–57 (PFEYAVLLTIIANCVVLAL). The Extracellular portion of the chain corresponds to 58–75 (EEHLPGGDKTVLAQKLEK). The helical transmembrane segment at 76-95 (TEAYFLCIFCVEASLKILAL) threads the bilayer. Residues 96 to 107 (GLVLHKHSYLRN) are Cytoplasmic-facing. A helical membrane pass occupies residues 108 to 128 (IWNIMDFFVVVTGFMTQYPQI). The Extracellular segment spans residues 129–133 (GPEVD). A helical membrane pass occupies residues 134-152 (LRTLRAIRVLRPLKLVSGI). At 153 to 171 (PSLQVVLKSIIKAMAPLLQ) the chain is on the cytoplasmic side. The chain crosses the membrane as a helical span at residues 172–191 (IGLLVLFAIVIFAIIGLEFY). At 192 to 288 (SGALHKTCYS…WTNDALGSAF (97 aa)) the chain is on the extracellular side. Asn234 and Asn235 each carry an N-linked (GlcNAc...) asparagine glycan. Residues 289 to 313 (NWIYFVPLIVIGSFFMLNLVLGVLS) form a helical membrane-spanning segment. Over 314 to 441 (GEFSNERNRV…FWIRHTVKTQ (128 aa)) the chain is Cytoplasmic. Positions 381 to 417 (RKKLKSLGKSKSTDTEEEEAEEDYGDDGYLKTRSKPQ) are disordered. Residues 395 to 406 (TEEEEAEEDYGD) are compositionally biased toward acidic residues. One copy of the II repeat lies at 427-670 (EKRFRFWIRH…VFLAIAVDNL (244 aa)). Residues 442-460 (WFYWFVIVLVFLNTVCVAV) form a helical membrane-spanning segment. Residues 461 to 475 (EHYGQPSFLTEFLYY) are Extracellular-facing. A helical membrane pass occupies residues 476 to 495 (AEFIFLGLFMSEMFIKMYAL). Topologically, residues 496-503 (GPRIYFES) are cytoplasmic. A helical transmembrane segment spans residues 504-522 (SFNRFDCVVISGSIFEVIW). The Extracellular segment spans residues 523–531 (SEVKGGSFG). A helical transmembrane segment spans residues 532 to 550 (LSVLRALRLLRIFKVTKYW). Residues 551-569 (SSLRNLVISLLNSMRSIIS) are Cytoplasmic-facing. Residues 570–589 (LLFLLFLFILIFALLGMQLF) form a helical membrane-spanning segment. Topologically, residues 590–642 (GGQFNLPGGTPETNFNTFPIALLTVFQILTGEDWNEVMYQGIISQGGAQKGMI) are extracellular. The chain crosses the membrane as a helical span at residues 643–667 (YSIYFIVLVLFGNYTLLNVFLAIAV). The Cytoplasmic segment spans residues 668 to 767 (DNLANAQELT…IRRGAHWVVN (100 aa)). The interval 710–741 (ENGDGAVAPSKSKGKKKEEEKKEEEEVTEGPK) is disordered. Residues 762–1049 (AHWVVNLPYF…IITFQEQGEA (288 aa)) form an III repeat. Residues 768–786 (LPYFDFFIMVVISMSSIAL) traverse the membrane as a helical segment. The Extracellular segment spans residues 787 to 802 (AAEDPVRENSRRNKIL). A helical membrane pass occupies residues 803 to 822 (NYFDYAFTGVFTIEMLLKIV). The Cytoplasmic portion of the chain corresponds to 823–834 (DLGVILHPGSYL). The helical transmembrane segment at 835–853 (REFWNIMDAVVVICAAVSF) threads the bilayer. The Extracellular portion of the chain corresponds to 854 to 866 (GFDMSGSSAGQNL). Asn865 carries N-linked (GlcNAc...) asparagine glycosylation. A helical transmembrane segment spans residues 867 to 885 (STIKSLRVLRVLRPLKTIK). Topologically, residues 886 to 904 (RVPKLKAVFDCVVNSLKNV) are cytoplasmic. The chain crosses the membrane as a helical span at residues 905 to 924 (VNILIVYILFQFIFSVIGVQ). Over 925–1013 (LFNGKFFYCT…EDRGPIQNFR (89 aa)) the chain is Extracellular. A helical membrane pass occupies residues 1014–1038 (IEMSIFYIVYFIVFPFFFVNIFVAL). At 1039–1093 (IIITFQEQGEAELQDGEIDKNQKSCIDFTIGARPLERYMPKNRNTFKYKVWRIVV) the chain is on the cytoplasmic side. The IV repeat unit spans residues 1086–1347 (YKVWRIVVST…DNFDYLTRDS (262 aa)). A helical transmembrane segment spans residues 1094–1122 (STPFEYFIMMLIVFNTLLLMMKYHNQGDM). The Extracellular segment spans residues 1123–1127 (YEKSL). Residues 1128-1147 (KYINMGFTGMFSVETVLKII) form a helical membrane-spanning segment. Topologically, residues 1148 to 1155 (GFGVKNFF) are cytoplasmic. The chain crosses the membrane as a helical span at residues 1156-1174 (KDPWNIFDLITVLGSIVDA). Over 1175-1184 (LWMEFGHDDS) the chain is Extracellular. A helical membrane pass occupies residues 1185–1203 (NSINVGFLRLFRAARLIKL). The Cytoplasmic portion of the chain corresponds to 1204 to 1222 (LRQGYTIRILLWTFVQSFK). The helical transmembrane segment at 1223 to 1242 (ALPYVCLLIAMLFFIYAIIG) threads the bilayer. The Extracellular segment spans residues 1243 to 1308 (MQVFGNIKLG…DAEKAPGEYC (66 aa)). The interval 1306 to 1348 (EYCGSTLAYAYFVSFIFFCSFLMLNLFVAVIMDNFDYLTRDSS) is phenylalkylamine binding. A helical membrane pass occupies residues 1309-1333 (GSTLAYAYFVSFIFFCSFLMLNLFV). Residues 1334-1851 (AVIMDNFDYL…HSDSDEEDWC (518 aa)) lie on the Cytoplasmic side of the membrane. Residues 1353-1388 (HHLDEFVRIWAEYDPNATGKIHYTEMYDMLKNMDPP) enclose the EF-hand domain. Residues Asp1366, Asn1368, Thr1370, Lys1372, and Glu1377 each coordinate Ca(2+). 4 disordered regions span residues 1513-1572 (DASR…HHDI), 1588-1653 (TRHP…SPAR), 1685-1764 (RAGI…DRDR), and 1823-1851 (VLPSPVLNGFKPKSGLNPRHSDSDEEDWC). Positions 1589-1600 (RHPRHGNSHPRY) are enriched in basic residues. The span at 1604-1619 (SWSASTSPARSPSPSR) shows a compositional bias: low complexity. Polar residues-rich tracts occupy residues 1637–1649 (YGTTSLCQRSRSP) and 1698–1710 (KPSTLQLKPTNIN). Residues 1734 to 1764 (HHRDLLRDPRDMYYSSRERERDRERLRDRDR) are compositionally biased toward basic and acidic residues.

The protein belongs to the calcium channel alpha-1 subunit (TC 1.A.1.11) family. In terms of tissue distribution, expressed widely in the embryonic nervous system.

It is found in the membrane. In terms of biological role, voltage-sensitive calcium channels (VSCC) mediate the entry of calcium ions into excitable cells and are also involved in a variety of calcium-dependent processes, including muscle contraction, neurotransmitter release, gene expression, cell motility, cell division and cell death. Probably encodes a dihydropyridine-insensitive current. Vital for survival to adulthood. This is Voltage-dependent calcium channel type A subunit alpha-1 (cac) from Drosophila melanogaster (Fruit fly).